Reading from the N-terminus, the 199-residue chain is Holliday junction branch migration complex subunit RuvA (199 aa).

Residues 1–63 (MIASVRGEVL…EDSMTLYGFT (63 aa)) form a domain I region. The interval 64-142 (DAETRDLFLT…AAGAAGAPAG (79 aa)) is domain II. A flexible linker region spans residues 143 to 153 (AARNGHAVRGP). The tract at residues 153–199 (PVVEALVGLGFAAKQAEEATDKVLAAEPEAGTSGALRAALSLLGKSR) is domain III.

The protein belongs to the RuvA family. As to quaternary structure, homotetramer. Forms an RuvA(8)-RuvB(12)-Holliday junction (HJ) complex. HJ DNA is sandwiched between 2 RuvA tetramers; dsDNA enters through RuvA and exits via RuvB. An RuvB hexamer assembles on each DNA strand where it exits the tetramer. Each RuvB hexamer is contacted by two RuvA subunits (via domain III) on 2 adjacent RuvB subunits; this complex drives branch migration. In the full resolvosome a probable DNA-RuvA(4)-RuvB(12)-RuvC(2) complex forms which resolves the HJ.

The protein resides in the cytoplasm. In terms of biological role, the RuvA-RuvB-RuvC complex processes Holliday junction (HJ) DNA during genetic recombination and DNA repair, while the RuvA-RuvB complex plays an important role in the rescue of blocked DNA replication forks via replication fork reversal (RFR). RuvA specifically binds to HJ cruciform DNA, conferring on it an open structure. The RuvB hexamer acts as an ATP-dependent pump, pulling dsDNA into and through the RuvAB complex. HJ branch migration allows RuvC to scan DNA until it finds its consensus sequence, where it cleaves and resolves the cruciform DNA. The polypeptide is Holliday junction branch migration complex subunit RuvA (Mycobacterium avium (strain 104)).